The sequence spans 193 residues: Potassium-transporting ATPase KdpC subunit (193 aa).

A helical transmembrane segment spans residues 14–34; it reads ITFTFLVLCGLVYPLIVTGIA.

The protein belongs to the KdpC family. The system is composed of three essential subunits: KdpA, KdpB and KdpC.

It localises to the cell membrane. Part of the high-affinity ATP-driven potassium transport (or Kdp) system, which catalyzes the hydrolysis of ATP coupled with the electrogenic transport of potassium into the cytoplasm. This subunit acts as a catalytic chaperone that increases the ATP-binding affinity of the ATP-hydrolyzing subunit KdpB by the formation of a transient KdpB/KdpC/ATP ternary complex. The chain is Potassium-transporting ATPase KdpC subunit from Bacillus mycoides (strain KBAB4) (Bacillus weihenstephanensis).